The following is a 131-amino-acid chain: Small ribosomal subunit protein uS8 (131 aa).

This sequence belongs to the universal ribosomal protein uS8 family. In terms of assembly, part of the 30S ribosomal subunit. Contacts proteins S5 and S12.

Functionally, one of the primary rRNA binding proteins, it binds directly to 16S rRNA central domain where it helps coordinate assembly of the platform of the 30S subunit. In Chlorobium phaeovibrioides (strain DSM 265 / 1930) (Prosthecochloris vibrioformis (strain DSM 265)), this protein is Small ribosomal subunit protein uS8.